The sequence spans 388 residues: 5-hydroxytryptamine receptor 1B (388 aa).

Residues 1–29 (MEQPSRLCSPPASGSLTSSQTNHSTFPNP) form a disordered region. The Extracellular segment spans residues 1-45 (MEQPSRLCSPPASGSLTSSQTNHSTFPNPNCSAPDLEPYQDSIAL). The segment covering 12-29 (ASGSLTSSQTNHSTFPNP) has biased composition (polar residues). N-linked (GlcNAc...) asparagine glycans are attached at residues Asn22 and Asn30. The helical transmembrane segment at 46–71 (PWKVLLATFLGLITLGTTLSNAFVIA) threads the bilayer. Over 72-85 (TVSRTRKLHTPANY) the chain is Cytoplasmic. Residues 86–110 (LIASLAVTDLLVSILVMPISTMYTV) traverse the membrane as a helical segment. The Extracellular portion of the chain corresponds to 111 to 118 (TGRWTLGQ). A helical transmembrane segment spans residues 119–144 (VVCDFWLSSDITCCTASILHLCVIAL). Cys121 and Cys197 are disulfide-bonded. Ergotamine-binding residues include Asp128 and Thr133. Residues 145-147 (DRY) carry the DRY motif; important for ligand-induced conformation changes and signaling motif. Over 145-164 (DRYWAITDAVEYSAKRTPKR) the chain is Cytoplasmic. The chain crosses the membrane as a helical span at residues 165-183 (AAGMIIMVWVFSVSISMPP). Residues 184–203 (LFWRQAKAEEVADCSVNTDH) are Extracellular-facing. Val199 contacts ergotamine. Residues 204–227 (ILYTVYSTVGAFYFPTLLLIALYG) form a helical membrane-spanning segment. Topologically, residues 228–313 (RIYVEARSRI…AARERKATRT (86 aa)) are cytoplasmic. Residues 249–282 (LTRAQLITDSPGSSSSGTSINSRAPEGPSESGSP) are disordered. The segment covering 255-270 (ITDSPGSSSSGTSINS) has biased composition (low complexity). The helical transmembrane segment at 314–335 (LGIILGAFIVCWLPFFIISLAL) threads the bilayer. Topologically, residues 336 to 345 (PICDDACWFH) are extracellular. The helical transmembrane segment at 346–368 (LAIFDFFNWLGYLNSLINPIIYT) threads the bilayer. Positions 363–367 (NPIIY) match the NPxxY motif; important for ligand-induced conformation changes and signaling motif. Residues 369–388 (KSNDDFKQAFQKLMRFRRTS) are Cytoplasmic-facing.

The protein belongs to the G-protein coupled receptor 1 family. In terms of assembly, homodimer. Heterodimer with HTR1D. Phosphorylated. Desensitization of the receptor may be mediated by its phosphorylation. Post-translationally, palmitoylated.

It localises to the cell membrane. G-protein coupled receptor for 5-hydroxytryptamine (serotonin). Also functions as a receptor for ergot alkaloid derivatives, various anxiolytic and antidepressant drugs and other psychoactive substances, such as lysergic acid diethylamide (LSD). Ligand binding causes a conformation change that triggers signaling via guanine nucleotide-binding proteins (G proteins) and modulates the activity of downstream effectors, such as adenylate cyclase. HTR1B is coupled to G(i)/G(o) G alpha proteins and mediates inhibitory neurotransmission by inhibiting adenylate cyclase activity. Arrestin family members inhibit signaling via G proteins and mediate activation of alternative signaling pathways. Regulates the release of 5-hydroxytryptamine, dopamine and acetylcholine in the brain, and thereby affects neural activity, nociceptive processing, pain perception, mood and behavior. Besides, plays a role in vasoconstriction of cerebral arteries. In Didelphis virginiana (North American opossum), this protein is 5-hydroxytryptamine receptor 1B (HTR1B).